The following is a 102-amino-acid chain: Large ribosomal subunit protein uL24 (102 aa).

It belongs to the universal ribosomal protein uL24 family. In terms of assembly, part of the 50S ribosomal subunit.

In terms of biological role, one of two assembly initiator proteins, it binds directly to the 5'-end of the 23S rRNA, where it nucleates assembly of the 50S subunit. One of the proteins that surrounds the polypeptide exit tunnel on the outside of the subunit. The protein is Large ribosomal subunit protein uL24 of Limosilactobacillus fermentum (strain NBRC 3956 / LMG 18251) (Lactobacillus fermentum).